The sequence spans 86 residues: Small ribosomal subunit protein uS15 (86 aa).

It belongs to the universal ribosomal protein uS15 family. Part of the 30S ribosomal subunit. Forms a bridge to the 50S subunit in the 70S ribosome, contacting the 23S rRNA.

In terms of biological role, one of the primary rRNA binding proteins, it binds directly to 16S rRNA where it helps nucleate assembly of the platform of the 30S subunit by binding and bridging several RNA helices of the 16S rRNA. Forms an intersubunit bridge (bridge B4) with the 23S rRNA of the 50S subunit in the ribosome. The polypeptide is Small ribosomal subunit protein uS15 (Ruthia magnifica subsp. Calyptogena magnifica).